We begin with the raw amino-acid sequence, 132 residues long: Fatty acid-binding protein type 2 (132 aa).

N-acetylalanine is present on A2.

The protein belongs to the calycin superfamily. Fatty-acid binding protein (FABP) family.

In Fasciola hepatica (Liver fluke), this protein is Fatty acid-binding protein type 2.